The following is a 1143-amino-acid chain: Exportin-T (1143 aa).

The interval 566–593 (ARNKLRAAQGSGRTTPSSSDNVDLGPSS) is disordered. Residues 576-593 (SGRTTPSSSDNVDLGPSS) show a composition bias toward polar residues.

The protein belongs to the exportin family.

Its subcellular location is the nucleus. The protein resides in the cytoplasm. Functionally, tRNA nucleus export receptor which facilitates tRNA translocation across the nuclear pore complex. Involved in pre-tRNA splicing, probably by affecting the interaction of pre-tRNA with splicing endonuclease. This is Exportin-T (LOS1) from Cryptococcus neoformans var. neoformans serotype D (strain JEC21 / ATCC MYA-565) (Filobasidiella neoformans).